The primary structure comprises 143 residues: Putative pre-16S rRNA nuclease (143 aa).

Belongs to the YqgF nuclease family.

The protein localises to the cytoplasm. Its function is as follows. Could be a nuclease involved in processing of the 5'-end of pre-16S rRNA. The protein is Putative pre-16S rRNA nuclease of Agathobacter rectalis (strain ATCC 33656 / DSM 3377 / JCM 17463 / KCTC 5835 / VPI 0990) (Eubacterium rectale).